A 1225-amino-acid chain; its full sequence is NHS-like protein 2 (1225 aa).

Disordered stretches follow at residues 161–180, 193–213, 291–371, 466–510, 543–632, 670–766, 812–1009, 1042–1093, and 1128–1203; these read TFRS…PQSA, QLSE…SLSL, NFSQ…ESMG, HMPE…TTDV, LSAQ…PEST, QGSS…KFPK, KTNP…KKPS, DTKC…DKTA, and KEPG…KTTN. 2 stretches are compositionally biased toward polar residues: residues 291 to 315 and 339 to 350; these read NFSQ…TSDI and SLTSPVLRTPSS. The residue at position 500 (Ser500) is a Phosphoserine. Residues 552–568 are compositionally biased toward basic residues; it reads RRQRSKSISLRKAKKKP. Phosphoserine is present on Ser576. Residues 675–688 are compositionally biased toward low complexity; it reads SLASPSTSRATTPS. Ser691 bears the Phosphoserine mark. Composition is skewed to polar residues over residues 710 to 730 and 812 to 827; these read SPSS…SMSL and KTNP…TQSD. The span at 841 to 851 shows a compositional bias: acidic residues; that stretch reads PEDDIESPEYA. The span at 852–867 shows a compositional bias: basic and acidic residues; sequence EEPRAEEVFTLPERKT. Composition is skewed to polar residues over residues 939-968 and 1054-1065; these read GEST…QPPQ and SLGQRVTSTPQA. The residue at position 1054 (Ser1054) is a Phosphoserine. Positions 1082 to 1093 are enriched in basic and acidic residues; that stretch reads TEEKSLISDKTA. A compositionally biased stretch (polar residues) spans 1138 to 1155; the sequence is RTSSHSPIKNTAESPISE. The span at 1156–1166 shows a compositional bias: low complexity; sequence STATAGSGSSA.

It belongs to the NHS family.

The polypeptide is NHS-like protein 2 (Homo sapiens (Human)).